The following is a 134-amino-acid chain: Protein YhfA (134 aa).

In Escherichia coli O157:H7, this protein is Protein YhfA (yhfA).